The sequence spans 317 residues: Malate dehydrogenase (317 aa).

NAD(+) contacts are provided by residues Gly10 to Gly15 and Asp34. 2 residues coordinate substrate: Arg83 and Arg89. Residues Asn96 and Ile119 to Asn121 contribute to the NAD(+) site. Substrate is bound by residues Asn121 and Arg152. The Proton acceptor role is filled by His176.

Belongs to the LDH/MDH superfamily. MDH type 3 family.

It catalyses the reaction (S)-malate + NAD(+) = oxaloacetate + NADH + H(+). Catalyzes the reversible oxidation of malate to oxaloacetate. The sequence is that of Malate dehydrogenase from Citrifermentans bemidjiense (strain ATCC BAA-1014 / DSM 16622 / JCM 12645 / Bem) (Geobacter bemidjiensis).